The sequence spans 549 residues: Glucose-6-phosphate isomerase (549 aa).

The active-site Proton donor is glutamate 355. Residues histidine 387 and lysine 515 contribute to the active site.

This sequence belongs to the GPI family.

The protein localises to the cytoplasm. The enzyme catalyses alpha-D-glucose 6-phosphate = beta-D-fructose 6-phosphate. The protein operates within carbohydrate biosynthesis; gluconeogenesis. Its pathway is carbohydrate degradation; glycolysis; D-glyceraldehyde 3-phosphate and glycerone phosphate from D-glucose: step 2/4. Catalyzes the reversible isomerization of glucose-6-phosphate to fructose-6-phosphate. This chain is Glucose-6-phosphate isomerase, found in Haemophilus influenzae (strain PittGG).